The primary structure comprises 349 residues: Biotin synthase (349 aa).

In terms of domain architecture, Radical SAM core spans 70–295 (PEVEVEGIIS…RTMLRFAGGR (226 aa)). Cys-85, Cys-89, and Cys-92 together coordinate [4Fe-4S] cluster. Positions 128, 161, 220, and 290 each coordinate [2Fe-2S] cluster.

It belongs to the radical SAM superfamily. Biotin synthase family. In terms of assembly, homodimer. [4Fe-4S] cluster is required as a cofactor. [2Fe-2S] cluster serves as cofactor.

The enzyme catalyses (4R,5S)-dethiobiotin + (sulfur carrier)-SH + 2 reduced [2Fe-2S]-[ferredoxin] + 2 S-adenosyl-L-methionine = (sulfur carrier)-H + biotin + 2 5'-deoxyadenosine + 2 L-methionine + 2 oxidized [2Fe-2S]-[ferredoxin]. Its pathway is cofactor biosynthesis; biotin biosynthesis; biotin from 7,8-diaminononanoate: step 2/2. In terms of biological role, catalyzes the conversion of dethiobiotin (DTB) to biotin by the insertion of a sulfur atom into dethiobiotin via a radical-based mechanism. This is Biotin synthase from Mycobacterium bovis (strain ATCC BAA-935 / AF2122/97).